The sequence spans 95 residues: ESAT-6-like protein EsxA (95 aa).

It belongs to the WXG100 family. ESAT-6 subfamily. In terms of assembly, forms a tight 1:1 complex with EsxB.

This is ESAT-6-like protein EsxA from Corynebacterium diphtheriae (strain ATCC 700971 / NCTC 13129 / Biotype gravis).